Here is a 178-residue protein sequence, read N- to C-terminus: N-alpha-acetyltransferase 20 (178 aa).

The region spanning 2-157 (TSLRPFTCDD…DAYDMRKALS (156 aa)) is the N-acetyltransferase domain. The tract at residues 159–178 (DTEKKSIVPLPHPVRPEDIE) is disordered.

Belongs to the acetyltransferase family. ARD1 subfamily. In terms of assembly, component of the N-terminal acetyltransferase B (NatB) complex which is composed of naa20 and naa25.

It localises to the cytoplasm. The protein localises to the nucleus. It carries out the reaction N-terminal L-methionyl-L-asparaginyl-[protein] + acetyl-CoA = N-terminal N(alpha)-acetyl-L-methionyl-L-asparaginyl-[protein] + CoA + H(+). The catalysed reaction is N-terminal L-methionyl-L-glutaminyl-[protein] + acetyl-CoA = N-terminal N(alpha)-acetyl-L-methionyl-L-glutaminyl-[protein] + CoA + H(+). It catalyses the reaction N-terminal L-methionyl-L-aspartyl-[protein] + acetyl-CoA = N-terminal N(alpha)-acetyl-L-methionyl-L-aspartyl-[protein] + CoA + H(+). The enzyme catalyses N-terminal L-methionyl-L-glutamyl-[protein] + acetyl-CoA = N-terminal N(alpha)-acetyl-L-methionyl-L-glutamyl-[protein] + CoA + H(+). In terms of biological role, catalytic subunit of the NatB complex which catalyzes acetylation of the N-terminal methionine residues of peptides beginning with Met-Asp, Met-Glu, Met-Asn and Met-Gln. Proteins with cell cycle functions are overrepresented in the pool of NatB substrates. Required for maintaining the structure and function of actomyosin fibers and for proper cellular migration. This is N-alpha-acetyltransferase 20 (naa20) from Xenopus tropicalis (Western clawed frog).